Here is a 281-residue protein sequence, read N- to C-terminus: Probable endonuclease 4 (281 aa).

Histidine 69, histidine 109, glutamate 145, aspartate 179, histidine 182, histidine 216, aspartate 229, histidine 231, and glutamate 261 together coordinate Zn(2+).

This sequence belongs to the AP endonuclease 2 family. It depends on Zn(2+) as a cofactor.

The enzyme catalyses Endonucleolytic cleavage to 5'-phosphooligonucleotide end-products.. Its function is as follows. Endonuclease IV plays a role in DNA repair. It cleaves phosphodiester bonds at apurinic or apyrimidinic (AP) sites, generating a 3'-hydroxyl group and a 5'-terminal sugar phosphate. In Buchnera aphidicola subsp. Acyrthosiphon pisum (strain APS) (Acyrthosiphon pisum symbiotic bacterium), this protein is Probable endonuclease 4.